Reading from the N-terminus, the 790-residue chain is DNA topoisomerase 1 (790 aa).

3 stretches are compositionally biased toward polar residues: residues 1–18 (MKSN…SNVM), 44–54 (KLSSGALNGNS), and 61–70 (SNLSCPSPYT). Residues 1 to 196 (MKSNPGITVI…KKRPDVSASV (196 aa)) are disordered. A compositionally biased stretch (acidic residues) spans 158-167 (QEEAAADDDP). Over residues 168–181 (SISNRNKKSTTPAS) the composition is skewed to polar residues. Interaction with DNA stretches follow at residues 426 to 427 (KY), 490 to 495 (RAGNEK), and 581 to 583 (TAK). In terms of domain architecture, Topo IB-type catalytic spans 433-790 (SSSLKGKVTR…AMDVVLIFRF (358 aa)). Tyr749 (O-(3'-phospho-DNA)-tyrosine intermediate) is an active-site residue.

The protein belongs to the type IB topoisomerase family.

Its subcellular location is the nucleus. The enzyme catalyses ATP-independent breakage of single-stranded DNA, followed by passage and rejoining.. Functionally, releases the supercoiling and torsional tension of DNA introduced during the DNA replication and transcription by transiently cleaving and rejoining one strand of the DNA duplex. Introduces a single-strand break via transesterification at a target site in duplex DNA. The scissile phosphodiester is attacked by the catalytic tyrosine of the enzyme, resulting in the formation of a DNA-(3'-phosphotyrosyl)-enzyme intermediate and the expulsion of a 5'-OH DNA strand. The free DNA strand then rotates around the intact phosphodiester bond on the opposing strand, thus removing DNA supercoils. Finally, in the religation step, the DNA 5'-OH attacks the covalent intermediate to expel the active-site tyrosine and restore the DNA phosphodiester backbone. The sequence is that of DNA topoisomerase 1 (TOP1) from Daucus carota (Wild carrot).